A 242-amino-acid chain; its full sequence is Biosynthetic peptidoglycan transglycosylase (242 aa).

A helical transmembrane segment spans residues 19-39 (LMVVLAVFWGGGIALFSVAPV).

Belongs to the glycosyltransferase 51 family.

The protein localises to the cell inner membrane. It carries out the reaction [GlcNAc-(1-&gt;4)-Mur2Ac(oyl-L-Ala-gamma-D-Glu-L-Lys-D-Ala-D-Ala)](n)-di-trans,octa-cis-undecaprenyl diphosphate + beta-D-GlcNAc-(1-&gt;4)-Mur2Ac(oyl-L-Ala-gamma-D-Glu-L-Lys-D-Ala-D-Ala)-di-trans,octa-cis-undecaprenyl diphosphate = [GlcNAc-(1-&gt;4)-Mur2Ac(oyl-L-Ala-gamma-D-Glu-L-Lys-D-Ala-D-Ala)](n+1)-di-trans,octa-cis-undecaprenyl diphosphate + di-trans,octa-cis-undecaprenyl diphosphate + H(+). It participates in cell wall biogenesis; peptidoglycan biosynthesis. Functionally, peptidoglycan polymerase that catalyzes glycan chain elongation from lipid-linked precursors. This Escherichia coli O139:H28 (strain E24377A / ETEC) protein is Biosynthetic peptidoglycan transglycosylase.